The primary structure comprises 314 residues: MENNTEVTEFILVGLTDDPELQIPLFIVFLFIYLITLVGNLGMIELILLDSCLHTPMYFFLSNLSLVDFGYSSAVTPKVMVGFLTGDKFILYNACATQFFFFVAFITAESFLLASMAYDRYAALCKPLHYTTTMTTNVCACLAIGSYICGFLNASIHTGNTFRLSFCRSNVVEHFFCDAPPLLTLSCSDNYISEMVIFFVVGFNDLFSILVILISYLFIFITIMKMRSPEGRQKAFSTCASHLTAVSIFYGTGIFMYLRPNSSHFMGTDKMASVFYAIVIPMLNPLVYSLRNKEVKSAFKKTVGKAKASIGFIF.

Over 1 to 23 (MENNTEVTEFILVGLTDDPELQI) the chain is Extracellular. N3 carries N-linked (GlcNAc...) asparagine glycosylation. A helical transmembrane segment spans residues 24–44 (PLFIVFLFIYLITLVGNLGMI). Residues 45–52 (ELILLDSC) are Cytoplasmic-facing. Residues 53-73 (LHTPMYFFLSNLSLVDFGYSS) traverse the membrane as a helical segment. The Extracellular portion of the chain corresponds to 74–97 (AVTPKVMVGFLTGDKFILYNACAT). C95 and C187 are joined by a disulfide. A helical membrane pass occupies residues 98-118 (QFFFFVAFITAESFLLASMAY). The Cytoplasmic segment spans residues 119–137 (DRYAALCKPLHYTTTMTTN). The helical transmembrane segment at 138–158 (VCACLAIGSYICGFLNASIHT) threads the bilayer. Residues 159 to 194 (GNTFRLSFCRSNVVEHFFCDAPPLLTLSCSDNYISE) are Extracellular-facing. The chain crosses the membrane as a helical span at residues 195–215 (MVIFFVVGFNDLFSILVILIS). Residues 216-235 (YLFIFITIMKMRSPEGRQKA) are Cytoplasmic-facing. The helical transmembrane segment at 236-256 (FSTCASHLTAVSIFYGTGIFM) threads the bilayer. Over 257-269 (YLRPNSSHFMGTD) the chain is Extracellular. N261 carries an N-linked (GlcNAc...) asparagine glycan. The helical transmembrane segment at 270–290 (KMASVFYAIVIPMLNPLVYSL) threads the bilayer. Residues 291–314 (RNKEVKSAFKKTVGKAKASIGFIF) lie on the Cytoplasmic side of the membrane.

It belongs to the G-protein coupled receptor 1 family.

It localises to the cell membrane. Its function is as follows. Odorant receptor. The sequence is that of Olfactory receptor 5B12 (OR5B12) from Homo sapiens (Human).